Here is a 439-residue protein sequence, read N- to C-terminus: FK506-binding protein 59 (439 aa).

PPIase FKBP-type domains are found at residues 32–120 (GCTV…LGWK) and 149–235 (GAFV…VDCG). 3 TPR repeats span residues 252–285 (AKVY…LPTT), 297–330 (VATH…DKNN), and 331–364 (VKAL…EPGN).

Interacts with inaD and trpl, and may be part of the inaD signaling complex. Expression in the embryo is limited to three tissues: lymph glands, Garland cells and oenocyte cells.

The enzyme catalyses [protein]-peptidylproline (omega=180) = [protein]-peptidylproline (omega=0). Its function is as follows. May have a role in phototransduction; inhibits or prevents Ca(2+) induced stimulation of the trpl ion channel. The sequence is that of FK506-binding protein 59 from Drosophila melanogaster (Fruit fly).